Consider the following 688-residue polypeptide: Lipase (688 aa).

A signal peptide spans Met-1–Ala-35. The disordered stretch occupies residues Gly-31 to Asn-309. The propeptide at Ala-36–Ala-302 is removed in mature form. The segment covering Val-45 to Gly-54 has biased composition (polar residues). Residues Asn-68 to Ser-79 are compositionally biased toward low complexity. Basic and acidic residues-rich tracts occupy residues Glu-84–Asp-95 and Ser-103–Ser-143. Residues Glu-144–Ala-172 are compositionally biased toward polar residues. Positions Lys-173 to Ser-183 are enriched in basic and acidic residues. Over residues Lys-184–Glu-211 the composition is skewed to polar residues. Basic and acidic residues predominate over residues Ser-240 to Ser-267. A compositionally biased stretch (polar residues) spans Leu-274–Gln-289. Ser-418 serves as the catalytic Nucleophile. Asp-609 (charge relay system) is an active-site residue. Residue Asp-647 coordinates Ca(2+). His-648 functions as the Charge relay system in the catalytic mechanism. Asp-650, Asp-655, and Asp-658 together coordinate Ca(2+).

Belongs to the AB hydrolase superfamily. Lipase family.

Its subcellular location is the secreted. It catalyses the reaction a triacylglycerol + H2O = a diacylglycerol + a fatty acid + H(+). This is Lipase (lip) from Staphylococcus epidermidis (strain ATCC 12228 / FDA PCI 1200).